The following is a 586-amino-acid chain: Aspartate--tRNA ligase (586 aa).

Glutamate 171 is an L-aspartate binding site. The interval 195 to 198 (QLFK) is aspartate. Residue arginine 217 coordinates L-aspartate. Residues 217–219 (RDE) and glutamine 226 contribute to the ATP site. Position 448 (histidine 448) interacts with L-aspartate. Residue glutamate 482 participates in ATP binding. Arginine 489 contacts L-aspartate. 534–537 (GLDR) serves as a coordination point for ATP.

It belongs to the class-II aminoacyl-tRNA synthetase family. Type 1 subfamily. As to quaternary structure, homodimer.

It localises to the cytoplasm. The enzyme catalyses tRNA(Asp) + L-aspartate + ATP = L-aspartyl-tRNA(Asp) + AMP + diphosphate. Functionally, catalyzes the attachment of L-aspartate to tRNA(Asp) in a two-step reaction: L-aspartate is first activated by ATP to form Asp-AMP and then transferred to the acceptor end of tRNA(Asp). The chain is Aspartate--tRNA ligase from Buchnera aphidicola subsp. Acyrthosiphon pisum (strain APS) (Acyrthosiphon pisum symbiotic bacterium).